Consider the following 526-residue polypeptide: Outer capsid protein VP5 (526 aa).

Positions 1-42 (MGKIIKSLSRFGKKVGNALTSNTAKKIYNTIGKAAERFAESE) are involved in membrane permeabilization.

It belongs to the orbivirus VP5 family.

It localises to the virion. VP5 protein is one of the two proteins (with VP2) which constitute the virus particle outer capsid. Acts as a membrane permeabilization protein that mediates release of viral particles from endosomal compartments into the cytoplasm. Permeabilization activity is probably negatively regulated by VP2 and is triggered by endosomal degradation of VP2 and exposure to low pH. This is Outer capsid protein VP5 (Segment-6) from Bluetongue virus 13 (isolate USA) (BTV 13).